The primary structure comprises 197 residues: MSRVGRVERTTKETSVLVEIDLDGTGKTDIATGVGFYDHMLDQLGRHGLFDLTVKTDGDLHIDSHHTIEDTALALGAAFRQALGDKVGIYRFGNCTVPLDESLAQVTVDLSGRPYLVHTEPENMAPMIGEYDVTMTRHILESFVAQAQVALHVHVPYGRNAHHIVECQFKALARALRYASERDPRAAGILPSTKGAL.

This sequence belongs to the imidazoleglycerol-phosphate dehydratase family.

It is found in the cytoplasm. It catalyses the reaction D-erythro-1-(imidazol-4-yl)glycerol 3-phosphate = 3-(imidazol-4-yl)-2-oxopropyl phosphate + H2O. It participates in amino-acid biosynthesis; L-histidine biosynthesis; L-histidine from 5-phospho-alpha-D-ribose 1-diphosphate: step 6/9. The polypeptide is Imidazoleglycerol-phosphate dehydratase (hisB) (Streptomyces coelicolor (strain ATCC BAA-471 / A3(2) / M145)).